The chain runs to 297 residues: Homoserine kinase (297 aa).

Residue 82–92 (PVSRGLGSSAA) participates in ATP binding.

Belongs to the GHMP kinase family. Homoserine kinase subfamily.

The protein localises to the cytoplasm. The enzyme catalyses L-homoserine + ATP = O-phospho-L-homoserine + ADP + H(+). The protein operates within amino-acid biosynthesis; L-threonine biosynthesis; L-threonine from L-aspartate: step 4/5. Its function is as follows. Catalyzes the ATP-dependent phosphorylation of L-homoserine to L-homoserine phosphate. This chain is Homoserine kinase, found in Clostridium botulinum (strain 657 / Type Ba4).